A 207-amino-acid polypeptide reads, in one-letter code: Thymidylate kinase (207 aa).

9-16 (GGEGCGKS) provides a ligand contact to ATP.

This sequence belongs to the thymidylate kinase family.

The catalysed reaction is dTMP + ATP = dTDP + ADP. In terms of biological role, phosphorylation of dTMP to form dTDP in both de novo and salvage pathways of dTTP synthesis. The protein is Thymidylate kinase of Dehalococcoides mccartyi (strain ATCC BAA-2266 / KCTC 15142 / 195) (Dehalococcoides ethenogenes (strain 195)).